A 336-amino-acid chain; its full sequence is Fructose-1,6-bisphosphatase class 1 (336 aa).

Residues Glu-90, Asp-112, Leu-114, and Asp-115 each contribute to the Mg(2+) site. Substrate is bound by residues 115–118, Asn-211, and Lys-277; that span reads DGSS. Glu-283 contributes to the Mg(2+) binding site.

It belongs to the FBPase class 1 family. As to quaternary structure, homotetramer. Requires Mg(2+) as cofactor.

It localises to the cytoplasm. It carries out the reaction beta-D-fructose 1,6-bisphosphate + H2O = beta-D-fructose 6-phosphate + phosphate. It participates in carbohydrate biosynthesis; gluconeogenesis. The polypeptide is Fructose-1,6-bisphosphatase class 1 (Pseudomonas entomophila (strain L48)).